Reading from the N-terminus, the 225-residue chain is Small ribosomal subunit protein uS3 (225 aa).

In terms of domain architecture, KH type-2 spans 16 to 85 (VYEYLVKETE…TPQIEVKDVK (70 aa)). Positions 200–225 (GENVGTESETDKADEQGREAANTEES) are disordered. Residues 208 to 217 (ETDKADEQGR) show a composition bias toward basic and acidic residues.

This sequence belongs to the universal ribosomal protein uS3 family. In terms of assembly, part of the 30S ribosomal subunit.

Binds the lower part of the 30S subunit head. The chain is Small ribosomal subunit protein uS3 from Thermoplasma volcanium (strain ATCC 51530 / DSM 4299 / JCM 9571 / NBRC 15438 / GSS1).